Here is a 641-residue protein sequence, read N- to C-terminus: Bifunctional protein glk (641 aa).

The glucokinase stretch occupies residues 1–340 (MSTGAQTKAA…QLSNRTGGAS (340 aa)). Residue 23–28 (ADVGGT) participates in ATP binding. The HTH rpiR-type domain maps to 341–417 (SAVFERIRQM…LKLATGLTGT (77 aa)). A putative HTH-type transcriptional regulator region spans residues 341 to 641 (SAVFERIRQM…SHGAAPAAKD (301 aa)). Residues 377–396 (IVDIARKADVSQPTVIRFCR) constitute a DNA-binding region (H-T-H motif). In terms of domain architecture, SIS spans 461–600 (AIDILNNARR…AVGVAIRRAA (140 aa)). Residues 576-596 (SMISRILHLVMIDILAVGVAI) form a helical membrane-spanning segment.

This sequence in the N-terminal section; belongs to the bacterial glucokinase family.

The protein resides in the membrane. The catalysed reaction is D-glucose + ATP = D-glucose 6-phosphate + ADP + H(+). This Burkholderia pseudomallei (strain 1710b) protein is Bifunctional protein glk (glk).